The chain runs to 385 residues: Glucans biosynthesis protein C (385 aa).

The next 10 membrane-spanning stretches (helical) occupy residues 17–37 (AWLMLLGIPFHISLIYSSHTW), 60–80 (MQVFFVISGYFSYMLFLRYPL), 91–111 (VGIPMLTAIPLLTLPQFIMLQ), 137–157 (ISHLWFLLVLVVMTTLCVWIF), 173–193 (KFSMVKLSVIFLCLGIGYAVI), 212–232 (FIVMQTLFYLPFFILGALAFI), 239–259 (LFTTPSRGCTFAAALAFVAYL), 274–294 (TESVITMVLGLWMVNVVFSFG), 311–331 (ASLFIYLVHHPLTLFFGAYIT), and 338–358 (WLGFLCGLIFVVGIAIILYEI).

The protein belongs to the acyltransferase 3 family. OpgC subfamily.

It is found in the cell membrane. It participates in glycan metabolism; osmoregulated periplasmic glucan (OPG) biosynthesis. In terms of biological role, necessary for the succinyl substitution of periplasmic glucans. Could catalyze the transfer of succinyl residues from the cytoplasmic side of the membrane to the nascent glucan backbones on the periplasmic side of the membrane. This chain is Glucans biosynthesis protein C, found in Escherichia coli O45:K1 (strain S88 / ExPEC).